We begin with the raw amino-acid sequence, 686 residues long: X-linked interleukin-1 receptor accessory protein-like 2 (686 aa).

Positions 1–16 are cleaved as a signal peptide; the sequence is MKPPFLLALVVCSVVS. Residues 17 to 354 lie on the Extracellular side of the membrane; sequence TNLKMVSKRN…LLRKKDLIYK (338 aa). The region spanning 18 to 132 is the Ig-like C2-type 1 domain; that stretch reads NLKMVSKRNS…YCMKVSMSLT (115 aa). A disulfide bridge connects residues Cys53 and Cys116. N-linked (GlcNAc...) asparagine glycosylation is found at Asn63, Asn120, Asn136, Asn211, and Asn328. Ig-like C2-type domains follow at residues 141–232 and 239–347; these read CYNS…LKVT and PPKP…VLLR. Cystine bridges form between Cys162/Cys214 and Cys265/Cys331. Residues 355–375 form a helical membrane-spanning segment; the sequence is IELAGGLGAIFLLLVLLVVIY. The Cytoplasmic portion of the chain corresponds to 376–686; it reads KCYNIELMLF…KELSFTSDIW (311 aa). One can recognise a TIR domain in the interval 400 to 556; the sequence is KEYDAYLSYT…KFWKHLVYEM (157 aa). Residue Glu488 is part of the active site.

It belongs to the interleukin-1 receptor family. In terms of tissue distribution, detected at low levels in fetal and adult brain, in particular in the frontal lobe, temporal lobe and cerebellum. Detected at very low levels in skin, liver, fetal ovary and in placenta.

The protein resides in the membrane. It catalyses the reaction NAD(+) + H2O = ADP-D-ribose + nicotinamide + H(+). The protein is X-linked interleukin-1 receptor accessory protein-like 2 (IL1RAPL2) of Homo sapiens (Human).